Here is a 111-residue protein sequence, read N- to C-terminus: Universal stress protein B (111 aa).

2 helical membrane passes run 1-21 (MIST…NMAR) and 90-110 (FLLT…LMIW).

This sequence belongs to the universal stress protein B family.

The protein localises to the cell inner membrane. The chain is Universal stress protein B from Salmonella arizonae (strain ATCC BAA-731 / CDC346-86 / RSK2980).